The sequence spans 227 residues: Phosphoribosylformylglycinamidine synthase subunit PurQ (227 aa).

A Glutamine amidotransferase type-1 domain is found at 3 to 225; that stretch reads FAVIVFPGSN…LKYWRETYVV (223 aa). C86 acts as the Nucleophile in catalysis. Active-site residues include H194 and E196.

As to quaternary structure, part of the FGAM synthase complex composed of 1 PurL, 1 PurQ and 2 PurS subunits.

The protein resides in the cytoplasm. It catalyses the reaction N(2)-formyl-N(1)-(5-phospho-beta-D-ribosyl)glycinamide + L-glutamine + ATP + H2O = 2-formamido-N(1)-(5-O-phospho-beta-D-ribosyl)acetamidine + L-glutamate + ADP + phosphate + H(+). The enzyme catalyses L-glutamine + H2O = L-glutamate + NH4(+). The protein operates within purine metabolism; IMP biosynthesis via de novo pathway; 5-amino-1-(5-phospho-D-ribosyl)imidazole from N(2)-formyl-N(1)-(5-phospho-D-ribosyl)glycinamide: step 1/2. In terms of biological role, part of the phosphoribosylformylglycinamidine synthase complex involved in the purines biosynthetic pathway. Catalyzes the ATP-dependent conversion of formylglycinamide ribonucleotide (FGAR) and glutamine to yield formylglycinamidine ribonucleotide (FGAM) and glutamate. The FGAM synthase complex is composed of three subunits. PurQ produces an ammonia molecule by converting glutamine to glutamate. PurL transfers the ammonia molecule to FGAR to form FGAM in an ATP-dependent manner. PurS interacts with PurQ and PurL and is thought to assist in the transfer of the ammonia molecule from PurQ to PurL. This Bacillus cytotoxicus (strain DSM 22905 / CIP 110041 / 391-98 / NVH 391-98) protein is Phosphoribosylformylglycinamidine synthase subunit PurQ.